The sequence spans 372 residues: NAD(P)H-quinone oxidoreductase subunit 1 (372 aa).

8 helical membrane-spanning segments follow: residues Ile27 to Val47, Ile97 to Val117, Val128 to Met148, Leu176 to Val196, Ile204 to Leu224, Ile266 to Val286, Ser308 to Leu328, and Phe347 to Pro367.

It belongs to the complex I subunit 1 family. In terms of assembly, NDH-1 is composed of at least 11 different subunits.

It is found in the cellular thylakoid membrane. The catalysed reaction is a plastoquinone + NADH + (n+1) H(+)(in) = a plastoquinol + NAD(+) + n H(+)(out). The enzyme catalyses a plastoquinone + NADPH + (n+1) H(+)(in) = a plastoquinol + NADP(+) + n H(+)(out). In terms of biological role, NDH-1 shuttles electrons from an unknown electron donor, via FMN and iron-sulfur (Fe-S) centers, to quinones in the respiratory and/or the photosynthetic chain. The immediate electron acceptor for the enzyme in this species is believed to be plastoquinone. Couples the redox reaction to proton translocation, and thus conserves the redox energy in a proton gradient. This chain is NAD(P)H-quinone oxidoreductase subunit 1, found in Prochlorococcus marinus (strain AS9601).